The chain runs to 252 residues: NAC domain-containing protein 23 (252 aa).

The 166-residue stretch at 12 to 177 (MPPGFRFQPT…EMVLCRISNK (166 aa)) folds into the NAC domain. A DNA-binding region spans residues 110–183 (TAVKRRFVFY…ISNKDLPKPP (74 aa)). The segment at 225-252 (VDDAAAADDDPGDLDEEIDDSMQRNHGG) is disordered. Residues 229-244 (AAADDDPGDLDEEIDD) show a composition bias toward acidic residues.

As to quaternary structure, forms heterodimers with NAC26. In terms of tissue distribution, expressed in stems and panicles. Expressed in developing seeds.

The protein localises to the nucleus. It is found in the cytoplasm. Transcription factor involved in the regulation of seed size. Possesses transactivation activity in yeast. This is NAC domain-containing protein 23 from Oryza sativa subsp. indica (Rice).